A 562-amino-acid chain; its full sequence is Zinc finger protein 579 (562 aa).

Positions 1-11 (MDPQPPPPAQG) are enriched in pro residues. The tract at residues 1-45 (MDPQPPPPAQGSPPHRDRGRGRGRGRGRGRGRGRGRGGAGAPRAP) is disordered. Basic residues predominate over residues 17 to 35 (DRGRGRGRGRGRGRGRGRG). 3 consecutive C2H2-type zinc fingers follow at residues 46-68 (LPCPTCGRLFRFPYYLSRHRLSH), 74-96 (HACPLCPKAFRRPAHLSRHLRGH), and 102-125 (LRCAACPRTFPEPAQLRRHLAQEH). Omega-N-methylarginine is present on Arg94. 2 disordered regions span residues 120-154 (HLAQEHAGSEVDLSTQRAVKEEPEASWGPQDEGVE) and 166-199 (EEATTQWPAGDSAPAAVPTSTDPRESEAKEAEAG). The span at 187 to 197 (DPRESEAKEAE) shows a compositional bias: basic and acidic residues. The residue at position 191 (Ser191) is a Phosphoserine. 2 consecutive C2H2-type zinc fingers follow at residues 267–289 (HQCSICLKAFARPWSLSRHRLVH) and 295–317 (FVCPDCGLAFRLASYLRQHRRVH). The interval 321–377 (SLLAPLPGAGKKDDKASGGRNSGKGPEGGEGAECGGASEGGEGGHNGGDATPARPPA) is disordered. Gly residues predominate over residues 340–367 (RNSGKGPEGGEGAECGGASEGGEGGHNG). 3 C2H2-type zinc fingers span residues 382 to 404 (FWCPECGKGFRRRAHLRQHGVTH), 410 to 432 (FQCVRCQREFKRLADLARHAQVH), and 439 to 461 (HPCPRCPRRFSRAYSLLRHQRCH). Residue Ser486 is modified to Phosphoserine. Residues 505–530 (AHIKEEPPSPGTPPQSPPAPPVFLSA) are disordered. Residues 512–525 (PSPGTPPQSPPAPP) show a composition bias toward pro residues.

The protein belongs to the krueppel C2H2-type zinc-finger protein family.

The protein resides in the nucleus. May be involved in transcriptional regulation. This Mus musculus (Mouse) protein is Zinc finger protein 579 (Znf579).